The chain runs to 669 residues: Small ribosomal subunit protein mS39 (669 aa).

Residues 1-13 constitute a mitochondrion transit peptide; that stretch reads MAAPCVRLGSVRC. PPR repeat units follow at residues 129–163, 164–199, 209–239, 240–274, 275–314, 315–351, 352–392, 396–430, 438–472, 473–507, and 556–590; these read IEGV…GTAP, SLET…DDQD, RPGQ…MPER, NAHS…RLTA, DVQT…NVRP, NLLT…NIEP, SLGT…FTLR, DVYF…DNRG, QSTY…LYYP, NSRG…GHSN, and SSAS…HRVP. The disordered stretch occupies residues 186 to 218; it reads DIQTSEQNQQDDQDQQETEDSKKRPGQYRKASE. Positions 194–203 are enriched in acidic residues; it reads QQDDQDQQET. The disordered stretch occupies residues 648 to 669; the sequence is EDLQKSHSSSSSSSESSDSDRE. Over residues 653–663 the composition is skewed to low complexity; the sequence is SHSSSSSSSES.

The protein belongs to the mitochondrion-specific ribosomal protein mS39 family.

Its subcellular location is the mitochondrion. Mitochondrial protein that may have a role in mitochondrial translation. The sequence is that of Small ribosomal subunit protein mS39 (ptcd3) from Xenopus laevis (African clawed frog).